The sequence spans 156 residues: Ribosomal RNA large subunit methyltransferase H (156 aa).

S-adenosyl-L-methionine is bound by residues L73, G104, and 123 to 128 (LSPLTL).

It belongs to the RNA methyltransferase RlmH family. Homodimer.

It is found in the cytoplasm. The enzyme catalyses pseudouridine(1915) in 23S rRNA + S-adenosyl-L-methionine = N(3)-methylpseudouridine(1915) in 23S rRNA + S-adenosyl-L-homocysteine + H(+). Specifically methylates the pseudouridine at position 1915 (m3Psi1915) in 23S rRNA. The polypeptide is Ribosomal RNA large subunit methyltransferase H (Aliivibrio salmonicida (strain LFI1238) (Vibrio salmonicida (strain LFI1238))).